A 104-amino-acid chain; its full sequence is UPF0213 protein plu4503 (104 aa).

A GIY-YIG domain is found at 4–79 (NQWVLYLLKT…KQLSKQQKER (76 aa)).

Belongs to the UPF0213 family.

This Photorhabdus laumondii subsp. laumondii (strain DSM 15139 / CIP 105565 / TT01) (Photorhabdus luminescens subsp. laumondii) protein is UPF0213 protein plu4503.